The following is a 459-amino-acid chain: Vitamin K-dependent protein C (459 aa).

Residues 1-18 (MWQLASLLLLLIIWAVSS) form the signal peptide. Residues 19 to 41 (TPVPPDSVFSSSQRAHQMLRSKR) constitute a propeptide that is removed on maturation. The Gla domain occupies 42–87 (ANSFLEELRPSSLERECKEETCDFEEAREIFQNTENTMAFWSKYHD). 4-carboxyglutamate occurs at positions 47, 48, 55, 57, 60, 61, 66, 67, 70, and 76. A disulfide bridge connects residues Cys-58 and Cys-63. Disulfide bonds link Cys-91-Cys-110, Cys-100-Cys-105, Cys-104-Cys-119, and Cys-121-Cys-130. EGF-like domains are found at residues 96 to 131 (PEHL…RFCL) and 135 to 175 (RFSN…LQCE). Position 112 is a (3R)-3-hydroxyaspartate (Asp-112). Asn-138 carries an N-linked (GlcNAc...) asparagine glycan. 5 cysteine pairs are disulfide-bonded: Cys-139–Cys-150, Cys-146–Cys-159, Cys-161–Cys-174, Cys-182–Cys-321, and Cys-240–Cys-256. Residues 214 to 448 (LVNGKQSPWG…YLDWIHGHIR (235 aa)) enclose the Peptidase S1 domain. The active-site Charge relay system is the His-255. Residue Asn-292 is glycosylated (N-linked (GlcNAc...) asparagine). Asp-301 serves as the catalytic Charge relay system. Asn-353 carries an N-linked (GlcNAc...) asparagine glycan. 2 cysteine pairs are disulfide-bonded: Cys-371–Cys-385 and Cys-396–Cys-424. The active-site Charge relay system is the Ser-400.

This sequence belongs to the peptidase S1 family. In terms of assembly, synthesized as a single chain precursor, which is cleaved into a light chain and a heavy chain held together by a disulfide bond. The enzyme is then activated by thrombin, which cleaves a tetradecapeptide from the amino end of the heavy chain; this reaction, which occurs at the surface of endothelial cells, is strongly promoted by thrombomodulin. Post-translationally, the vitamin K-dependent, enzymatic carboxylation of some Glu residues allows the modified protein to bind calcium. In terms of processing, the iron and 2-oxoglutarate dependent 3-hydroxylation of aspartate and asparagine is (R) stereospecific within EGF domains. In terms of tissue distribution, plasma; synthesized in the liver.

The protein localises to the secreted. It localises to the golgi apparatus. It is found in the endoplasmic reticulum. The catalysed reaction is Degradation of blood coagulation factors Va and VIIIa.. Protein C is a vitamin K-dependent serine protease that regulates blood coagulation by inactivating factors Va and VIIIa in the presence of calcium ions and phospholipids. Exerts a protective effect on the endothelial cell barrier function. The protein is Vitamin K-dependent protein C (PROC) of Sus scrofa (Pig).